A 65-amino-acid polypeptide reads, in one-letter code: Conotoxin Cal1.5 (65 aa).

A signal peptide spans 1 to 18 (MRCLPVFIILLLLASTAA). Residues 19–49 (VDVAGSKLKRRLERKPYQGSQAYVKKTAFGL) constitute a propeptide that is removed on maturation. Intrachain disulfides connect Cys-52–Cys-62 and Cys-53–Cys-59. Pro-61 is modified (4-hydroxyproline).

It belongs to the conotoxin T superfamily. In terms of tissue distribution, expressed by the venom duct.

Its subcellular location is the secreted. Functionally, probable neurotoxin with unknown target. Possibly targets ion channels. The sequence is that of Conotoxin Cal1.5 from Californiconus californicus (California cone).